We begin with the raw amino-acid sequence, 334 residues long: Succinylglutamate desuccinylase (334 aa).

Zn(2+) contacts are provided by His-59, Glu-62, and His-151. Residue Glu-215 is part of the active site.

This sequence belongs to the AspA/AstE family. Succinylglutamate desuccinylase subfamily. Zn(2+) serves as cofactor.

It carries out the reaction N-succinyl-L-glutamate + H2O = L-glutamate + succinate. It participates in amino-acid degradation; L-arginine degradation via AST pathway; L-glutamate and succinate from L-arginine: step 5/5. Its function is as follows. Transforms N(2)-succinylglutamate into succinate and glutamate. This Pseudomonas fluorescens (strain SBW25) protein is Succinylglutamate desuccinylase.